Here is a 313-residue protein sequence, read N- to C-terminus: Methionyl-tRNA formyltransferase (313 aa).

(6S)-5,6,7,8-tetrahydrofolate is bound at residue serine 110–proline 113.

The protein belongs to the Fmt family.

The catalysed reaction is L-methionyl-tRNA(fMet) + (6R)-10-formyltetrahydrofolate = N-formyl-L-methionyl-tRNA(fMet) + (6S)-5,6,7,8-tetrahydrofolate + H(+). In terms of biological role, attaches a formyl group to the free amino group of methionyl-tRNA(fMet). The formyl group appears to play a dual role in the initiator identity of N-formylmethionyl-tRNA by promoting its recognition by IF2 and preventing the misappropriation of this tRNA by the elongation apparatus. The chain is Methionyl-tRNA formyltransferase from Enterococcus faecalis (strain ATCC 700802 / V583).